The sequence spans 375 residues: Anhydro-N-acetylmuramic acid kinase 1 (375 aa).

Position 20–27 (20–27 (GTSFDGVD)) interacts with ATP. Positions 351 to 375 (APSTTGVAAPVGGGRRSKPGARELS) are disordered.

It belongs to the anhydro-N-acetylmuramic acid kinase family.

It carries out the reaction 1,6-anhydro-N-acetyl-beta-muramate + ATP + H2O = N-acetyl-D-muramate 6-phosphate + ADP + H(+). Its pathway is amino-sugar metabolism; 1,6-anhydro-N-acetylmuramate degradation. It functions in the pathway cell wall biogenesis; peptidoglycan recycling. Functionally, catalyzes the specific phosphorylation of 1,6-anhydro-N-acetylmuramic acid (anhMurNAc) with the simultaneous cleavage of the 1,6-anhydro ring, generating MurNAc-6-P. Is required for the utilization of anhMurNAc either imported from the medium or derived from its own cell wall murein, and thus plays a role in cell wall recycling. The sequence is that of Anhydro-N-acetylmuramic acid kinase 1 from Jannaschia sp. (strain CCS1).